Consider the following 587-residue polypeptide: Prolycopene isomerase 2, chloroplastic (587 aa).

The N-terminal 50 residues, 1 to 50 (MLCLSLNSSSTSPPKLPLHHSFSRRGIRSWVRSPCVQRKKLGFWSSPKAV), are a transit peptide targeting the chloroplast.

The protein belongs to the carotenoid/retinoid oxidoreductase family. CrtISO subfamily. The cofactor is NAD(+). NADP(+) is required as a cofactor. FAD serves as cofactor. Up-regulated in the flower buds and flower lip tissue, while it is weakly expressed in leaves.

The protein resides in the plastid. It is found in the chloroplast membrane. The catalysed reaction is 7,7',9,9'-tetra-cis-lycopene = all-trans-lycopene. It functions in the pathway carotenoid biosynthesis; lycopene biosynthesis. Functionally, carotene cis-trans-isomerase that converts 7,9,9'-tri-cis-neurosporene to 9'-cis-neurosporene and 7,9,9',7'-tetra-cis-lycopene (also known as prolycopene) into all-trans-lycopene. Isomerization requires redox-active components, suggesting that isomerization is achieved by a reversible redox reaction acting at specific double bonds. Isomerizes adjacent cis-double bonds at C7 and C9 pairwise into the trans-configuration, but is incapable of isomerizing single cis-double bonds at C9 and C9'. In Oncidium hybrid cultivar (Orchid), this protein is Prolycopene isomerase 2, chloroplastic (CRTISO2).